A 938-amino-acid polypeptide reads, in one-letter code: Bifunctional glutamine synthetase adenylyltransferase/adenylyl-removing enzyme (938 aa).

The segment at 1 to 457 is adenylyl removase; sequence MLEADAARLK…HFDHVFGDPS (457 aa). Residues 460–938 form an adenylyl transferase region; the sequence is AHTLDSMWAA…ALWTIVFGSA (479 aa).

The protein belongs to the GlnE family. The cofactor is Mg(2+).

The enzyme catalyses [glutamine synthetase]-O(4)-(5'-adenylyl)-L-tyrosine + phosphate = [glutamine synthetase]-L-tyrosine + ADP. It catalyses the reaction [glutamine synthetase]-L-tyrosine + ATP = [glutamine synthetase]-O(4)-(5'-adenylyl)-L-tyrosine + diphosphate. Involved in the regulation of glutamine synthetase GlnA, a key enzyme in the process to assimilate ammonia. When cellular nitrogen levels are high, the C-terminal adenylyl transferase (AT) inactivates GlnA by covalent transfer of an adenylyl group from ATP to specific tyrosine residue of GlnA, thus reducing its activity. Conversely, when nitrogen levels are low, the N-terminal adenylyl removase (AR) activates GlnA by removing the adenylyl group by phosphorolysis, increasing its activity. The regulatory region of GlnE binds the signal transduction protein PII (GlnB) which indicates the nitrogen status of the cell. In Aromatoleum aromaticum (strain DSM 19018 / LMG 30748 / EbN1) (Azoarcus sp. (strain EbN1)), this protein is Bifunctional glutamine synthetase adenylyltransferase/adenylyl-removing enzyme.